The primary structure comprises 554 residues: Esterase cest-33 (554 aa).

The N-myristoyl glycine moiety is linked to residue Gly2. An intrachain disulfide couples Cys76 to Cys98. The active-site Acyl-ester intermediate is the Ser208. Catalysis depends on charge relay system residues Glu331 and His446.

The protein belongs to the type-B carboxylesterase/lipase family.

It localises to the cytoplasm. The protein resides in the cell membrane. The enzyme catalyses a carboxylic ester + H2O = an alcohol + a carboxylate + H(+). The sequence is that of Esterase cest-33 from Caenorhabditis elegans.